The following is a 124-amino-acid chain: Large ribosomal subunit protein bL12 (124 aa).

This sequence belongs to the bacterial ribosomal protein bL12 family. As to quaternary structure, homodimer. Part of the ribosomal stalk of the 50S ribosomal subunit. Forms a multimeric L10(L12)X complex, where L10 forms an elongated spine to which 2 to 4 L12 dimers bind in a sequential fashion. Binds GTP-bound translation factors.

In terms of biological role, forms part of the ribosomal stalk which helps the ribosome interact with GTP-bound translation factors. Is thus essential for accurate translation. This Leptothrix cholodnii (strain ATCC 51168 / LMG 8142 / SP-6) (Leptothrix discophora (strain SP-6)) protein is Large ribosomal subunit protein bL12.